The chain runs to 495 residues: MADRNLRDLLAPLGIDAPVRELREMTLDSRKSSAGDLFVAIKGHQTDGRHYIPQAIAQGVAAVIAEAQGEVDNGTVQIMHGVPVVYVNDLNNKLSQLAGEFYCHPGDKLHLIGVTGTNGKTTTTQLLAQWSHGLGETSAVMGTVGNGLLGRVAPSENTTGSAVDIQLDLQQLVRQEATFAAMEVSSHGLVQGRVAALPFEAAVFTNLSRDHLDYHGDMEHYEAAKWLLFSTHNVKQQIINADDEIGLKWLSRLPQAVAVTMENRLPENWQGRWLAAREIKYHDKGVSITFESSWGGGTIDSSLMGAFNVSNLLLALSTLLALDYPLEKLLETASCLEPVCGRMEVFTTPGKPVVVVDYAHTPDALEKALMAARLHCQGKLWCVFGCGGDRDKGKRPLMGGVAEQLADYVIVTDDNPRNEEPQAIIADILTGFLDPGRAIAIHGRVEAVTNAIMQAKADDVVLIAGKGHEDYQLVGHRRLDYSDRLTVARLLGVIA.

UDP-N-acetyl-alpha-D-muramoyl-L-alanyl-D-glutamate-binding positions include Leu-27, Ser-29, and 44 to 46 (HQT). 116–122 (GTNGKTT) provides a ligand contact to ATP. UDP-N-acetyl-alpha-D-muramoyl-L-alanyl-D-glutamate is bound by residues Asn-157, 158-159 (TT), Ser-185, Gln-191, and Arg-193. Lys-225 carries the N6-carboxylysine modification. Residues Arg-390, 414–417 (DNPR), Gly-465, and Glu-469 each bind meso-2,6-diaminopimelate. Positions 414 to 417 (DNPR) match the Meso-diaminopimelate recognition motif motif.

Belongs to the MurCDEF family. MurE subfamily. Mg(2+) serves as cofactor. In terms of processing, carboxylation is probably crucial for Mg(2+) binding and, consequently, for the gamma-phosphate positioning of ATP.

The protein localises to the cytoplasm. The enzyme catalyses UDP-N-acetyl-alpha-D-muramoyl-L-alanyl-D-glutamate + meso-2,6-diaminopimelate + ATP = UDP-N-acetyl-alpha-D-muramoyl-L-alanyl-gamma-D-glutamyl-meso-2,6-diaminopimelate + ADP + phosphate + H(+). Its pathway is cell wall biogenesis; peptidoglycan biosynthesis. Its function is as follows. Catalyzes the addition of meso-diaminopimelic acid to the nucleotide precursor UDP-N-acetylmuramoyl-L-alanyl-D-glutamate (UMAG) in the biosynthesis of bacterial cell-wall peptidoglycan. This is UDP-N-acetylmuramoyl-L-alanyl-D-glutamate--2,6-diaminopimelate ligase from Photorhabdus laumondii subsp. laumondii (strain DSM 15139 / CIP 105565 / TT01) (Photorhabdus luminescens subsp. laumondii).